A 47-amino-acid polypeptide reads, in one-letter code: Defensin Ec-AMP-D1 (47 aa).

Cystine bridges form between cysteine 3–cysteine 47, cysteine 14–cysteine 34, cysteine 20–cysteine 41, and cysteine 24–cysteine 43.

Functionally, has antifungal activity. Inhibits spore germination in F.graminearum (IC(50)=15 ug/ml), F.oxysporum (IC(50)=102 ug/ml), F.verticillioides (IC(50)=8.5 ug/ml) and D.maydis (IC(50)=12.5 ug/ml), but not in C.graminicola, B.cinerea and H.sativum at concentrations below 30 ug/ml. Inhibits hyphal development in P.infestans (IC(50)=25.5 ug/ml), but not release of zoospores. At concentrations above 100 ug/ml, induces morphological changes such as lysis of hyphae and sporangia in P.infestans. The polypeptide is Defensin Ec-AMP-D1 (Echinochloa crus-galli (Barnyard grass)).